The sequence spans 922 residues: Hexokinase-3 (922 aa).

The tract at residues 1-23 (MATIGPSGLHPGERASVCPHEGV) is disordered. Hexokinase domains follow at residues 25-469 (RPSG…MVTA) and 475-911 (AAHR…LVTA). The segment at 82-218 (HGTEQGDFLV…TYRIDVVAMV (137 aa)) is hexokinase small subdomain 1. Position 93–100 (93–100 (ELGATGAS)) interacts with ATP. A D-glucose 6-phosphate-binding site is contributed by 93-102 (ELGATGASLR). Residues Ser166, 183–184 (TK), and 219–220 (ND) contribute to the D-glucose site. The tract at residues 219–458 (NDTVGTMMGC…CDVSFIPSVD (240 aa)) is hexokinase large subdomain 1. The D-glucose 6-phosphate site is built by Asp220 and Thr243. Residues Asn246, Glu271, and 302–305 (QRFE) each bind D-glucose. 424–426 (GGR) is a binding site for D-glucose 6-phosphate. ATP contacts are provided by residues 436–437 (RI) and 540–545 (DLGGTN). The interval 529-660 (DGSERGDFLA…AVELNVVAIV (132 aa)) is hexokinase small subdomain 2. 540–544 (DLGGT) provides a ligand contact to D-glucose 6-phosphate. D-glucose contacts are provided by residues 608 to 609 (SF), 625 to 626 (TK), and 661 to 662 (ND). The tract at residues 661–900 (NDTVGTMMSC…CTVTFLQSED (240 aa)) is hexokinase large subdomain 2. Residues Asp662 and Thr685 each coordinate D-glucose 6-phosphate. Thr685 serves as a coordination point for ATP. D-glucose is bound by residues 687–688 (TN), Glu713, and Glu747. ATP contacts are provided by residues 752-753 (GM), 789-793 (TKFLS), and 868-872 (TLYKL). Residues 866-868 (DGT) and Ser902 each bind D-glucose 6-phosphate.

This sequence belongs to the hexokinase family.

It catalyses the reaction a D-hexose + ATP = a D-hexose 6-phosphate + ADP + H(+). It carries out the reaction D-fructose + ATP = D-fructose 6-phosphate + ADP + H(+). The enzyme catalyses D-glucose + ATP = D-glucose 6-phosphate + ADP + H(+). It functions in the pathway carbohydrate metabolism; hexose metabolism. Its pathway is carbohydrate degradation; glycolysis; D-glyceraldehyde 3-phosphate and glycerone phosphate from D-glucose: step 1/4. Its activity is regulated as follows. Hexokinase is an allosteric enzyme inhibited by its product D-glucose 6-phosphate. In terms of biological role, catalyzes the phosphorylation of hexose, such as D-glucose and D-fructose, to hexose 6-phosphate (D-glucose 6-phosphate and D-fructose 6-phosphate, respectively). Mediates the initial step of glycolysis by catalyzing phosphorylation of D-glucose to D-glucose 6-phosphate. In Mus musculus (Mouse), this protein is Hexokinase-3.